The primary structure comprises 265 residues: 3-methyl-2-oxobutanoate hydroxymethyltransferase (265 aa).

Asp45 and Asp84 together coordinate Mg(2+). 3-methyl-2-oxobutanoate contacts are provided by residues Asp45–Ser46, Asp84, and Lys112. Residue Glu114 coordinates Mg(2+). Glu181 functions as the Proton acceptor in the catalytic mechanism.

The protein belongs to the PanB family. In terms of assembly, homodecamer; pentamer of dimers. The cofactor is Mg(2+).

Its subcellular location is the cytoplasm. The enzyme catalyses 3-methyl-2-oxobutanoate + (6R)-5,10-methylene-5,6,7,8-tetrahydrofolate + H2O = 2-dehydropantoate + (6S)-5,6,7,8-tetrahydrofolate. Its pathway is cofactor biosynthesis; (R)-pantothenate biosynthesis; (R)-pantoate from 3-methyl-2-oxobutanoate: step 1/2. Catalyzes the reversible reaction in which hydroxymethyl group from 5,10-methylenetetrahydrofolate is transferred onto alpha-ketoisovalerate to form ketopantoate. This Pseudoalteromonas atlantica (strain T6c / ATCC BAA-1087) protein is 3-methyl-2-oxobutanoate hydroxymethyltransferase.